The following is a 267-amino-acid chain: uncharacterized protein (267 aa).

This sequence belongs to the lin-8 family.

This is an uncharacterized protein from Caenorhabditis elegans.